Consider the following 381-residue polypeptide: Hps1-dma1 cluster transcription factor tfc7 (381 aa).

A DNA-binding region (zn(2)-C6 fungal-type) is located at residues 10-37 (CDHCSATKIKCTQERPQCTRCRALGRDC). A disordered region spans residues 41-88 (RSLRAGKPPRSSQGLNRKISNAPVLPRQNTPVSNPTSMSSKPEHWPTM). 2 stretches are compositionally biased toward polar residues: residues 50–59 (RSSQGLNRKI) and 67–80 (RQNT…SMSS).

It is found in the nucleus. Functionally, transcription factor that regulates the expression of the hps1-dma1 gene cluster that probably mediates the biosynthesis a derivative of cyclopiazonic acid (CPA). Further studies are required to whether the CPA-like hps1-dma1 cluster is functional or a non-functional relic reflecting evolution of D.septosporum. In Dothistroma septosporum (strain NZE10 / CBS 128990) (Red band needle blight fungus), this protein is Hps1-dma1 cluster transcription factor tfc7 (tfc7).